The chain runs to 418 residues: Creatine kinase U-type, mitochondrial (418 aa).

A mitochondrion-targeting transit peptide spans 1–39 (MAGPFSRLLSARPGLRLLALAGAGSLTAGILLRPESVGA). The cardiolipin-binding stretch occupies residues 40 to 64 (AAAERRRLYPPSAEYPDLRKHNNCM). The Phosphagen kinase N-terminal domain occupies 46–132 (RLYPPSAEYP…FDPVIQERHN (87 aa)). The residue at position 152 (Ser-152) is a Phosphoserine. Positions 159 to 401 (YVLSSRVRTG…NYLIDCERRL (243 aa)) constitute a Phosphagen kinase C-terminal domain. 162–166 (SSRVR) lines the ATP pocket. Ser-197 is modified (phosphoserine). Thr-214 carries the phosphothreonine modification. Residue His-225 participates in ATP binding. Phosphoserine is present on Ser-233. ATP contacts are provided by residues Arg-270, Arg-326, and 354–359 (RGTGGV). Residue Thr-356 is modified to Phosphothreonine. Residue Ser-366 is modified to Phosphoserine. ATP is bound at residue Asp-369.

This sequence belongs to the ATP:guanido phosphotransferase family. As to quaternary structure, exists as an octamer composed of four MTCK homodimers.

Its subcellular location is the mitochondrion inner membrane. It carries out the reaction creatine + ATP = N-phosphocreatine + ADP + H(+). Its function is as follows. Reversibly catalyzes the transfer of phosphate between ATP and various phosphogens (e.g. creatine phosphate). Creatine kinase isoenzymes play a central role in energy transduction in tissues with large, fluctuating energy demands, such as skeletal muscle, heart, brain and spermatozoa. The sequence is that of Creatine kinase U-type, mitochondrial (Ckmt1) from Mus musculus (Mouse).